The sequence spans 860 residues: Ribosome-releasing factor 2, mitochondrial (860 aa).

A tr-type G domain is found at 45–337 (DRTRNIGIIA…AVVNFLPSPL (293 aa)). Residues 54-61 (AHIDAGKT), 118-122 (DTPGH), and 172-175 (NKMD) contribute to the GTP site.

This sequence belongs to the TRAFAC class translation factor GTPase superfamily. Classic translation factor GTPase family. EF-G/EF-2 subfamily.

It is found in the mitochondrion. In terms of biological role, mitochondrial GTPase that mediates the disassembly of ribosomes from messenger RNA at the termination of mitochondrial protein biosynthesis. Not involved in the GTP-dependent ribosomal translocation step during translation elongation. The chain is Ribosome-releasing factor 2, mitochondrial from Debaryomyces hansenii (strain ATCC 36239 / CBS 767 / BCRC 21394 / JCM 1990 / NBRC 0083 / IGC 2968) (Yeast).